The sequence spans 203 residues: Glycerol-3-phosphate acyltransferase (203 aa).

4 helical membrane passes run leucine 6–valine 26, alanine 82–phenylalanine 102, alanine 118–isoleucine 138, and tyrosine 141–aspartate 161.

The protein belongs to the PlsY family. Probably interacts with PlsX.

The protein resides in the cell inner membrane. It catalyses the reaction an acyl phosphate + sn-glycerol 3-phosphate = a 1-acyl-sn-glycero-3-phosphate + phosphate. It participates in lipid metabolism; phospholipid metabolism. Functionally, catalyzes the transfer of an acyl group from acyl-phosphate (acyl-PO(4)) to glycerol-3-phosphate (G3P) to form lysophosphatidic acid (LPA). This enzyme utilizes acyl-phosphate as fatty acyl donor, but not acyl-CoA or acyl-ACP. The sequence is that of Glycerol-3-phosphate acyltransferase from Shewanella oneidensis (strain ATCC 700550 / JCM 31522 / CIP 106686 / LMG 19005 / NCIMB 14063 / MR-1).